A 141-amino-acid polypeptide reads, in one-letter code: Cholinesterase (141 aa).

An N-linked (GlcNAc...) asparagine glycan is attached at Asn39. Substrate is bound at residue 49–50 (GG). Ser131 functions as the Acyl-ester intermediate in the catalytic mechanism. Ser131 bears the Phosphoserine mark.

Belongs to the type-B carboxylesterase/lipase family. As to quaternary structure, homotetramer; disulfide-linked. Dimer of dimers. As to expression, present in most cells except erythrocytes.

It localises to the secreted. The catalysed reaction is an acylcholine + H2O = a carboxylate + choline + H(+). Its function is as follows. Esterase with broad substrate specificity. Contributes to the inactivation of the neurotransmitter acetylcholine. Can degrade neurotoxic organophosphate esters. The protein is Cholinesterase (BCHE) of Canis lupus familiaris (Dog).